The chain runs to 532 residues: Muscarinic acetylcholine receptor M5 (532 aa).

The Extracellular portion of the chain corresponds to 1–29 (MEGDSYHNATTVNGTPVNHQPLERHRLWE). An N-linked (GlcNAc...) asparagine glycan is attached at Asn8. The helical transmembrane segment at 30 to 53 (VITIAAVTAVVSLITIVGNVLVMI) threads the bilayer. Residues 54 to 66 (SFKVNSQLKTVNN) are Cytoplasmic-facing. Residues 67-87 (YYLLSLACADLIIGIFSMNLY) form a helical membrane-spanning segment. Topologically, residues 88-104 (TTYILMGRWALGSLACD) are extracellular. Cys103 and Cys183 are oxidised to a cystine. The chain crosses the membrane as a helical span at residues 105 to 126 (LWLALDYVASNASVMNLLVISF). The Cytoplasmic portion of the chain corresponds to 127 to 146 (DRYFSITRPLTYRAKRTPKR). Residues 147–169 (AGIMIGLAWLISFILWAPAILCW) form a helical membrane-spanning segment. Topologically, residues 170-191 (QYLVGKRTVPLDECQIQFLSEP) are extracellular. A helical transmembrane segment spans residues 192-214 (TITFGTAIAAFYIPVSVMTILYC). The Cytoplasmic segment spans residues 215-443 (RIYRETEKRT…LVKERKAAQT (229 aa)). Residues 262–294 (AQRERNQASWSSSRRSTSTTGKPSQATGPSANW) form a disordered region. The span at 270-281 (SWSSSRRSTSTT) shows a compositional bias: low complexity. Residues 282-291 (GKPSQATGPS) are compositionally biased toward polar residues. A helical transmembrane segment spans residues 444–464 (LSAILLAFIITWTPYNIMVLV). The Extracellular portion of the chain corresponds to 465-478 (STFCDKCVPVTLWH). Residues 479 to 498 (LGYWLCYVNSTVNPICYALC) form a helical membrane-spanning segment. Topologically, residues 499 to 532 (NRTFRKTFKMLLLCRWKKKKVEEKLYWQGNSKLP) are cytoplasmic. Residues Thr501 and Thr505 each carry the phosphothreonine modification.

Belongs to the G-protein coupled receptor 1 family. Muscarinic acetylcholine receptor subfamily. CHRM5 sub-subfamily.

It is found in the cell membrane. It localises to the postsynaptic cell membrane. Functionally, the muscarinic acetylcholine receptor mediates various cellular responses, including inhibition of adenylate cyclase, breakdown of phosphoinositides and modulation of potassium channels through the action of G proteins. Primary transducing effect is Pi turnover. This Homo sapiens (Human) protein is Muscarinic acetylcholine receptor M5 (CHRM5).